We begin with the raw amino-acid sequence, 284 residues long: MFKKFKPVTPGTRQLILPSFDELTTQGELKGSSSRRSVRPNKKLSFFKKSSGGRDNLGHISCRHRGGGVRRHYRVIDFKRNKDGIEAKVASVEYDPNRSAYIALLNYVDGEKRYILAPKGIKRGDRVISGEGSPFKTGCCMTLKSIPLGLSVHNVEMRPGSGGKLVRSAGLSAQIIAKTAGYVTLKMPSGEFRMLNEMCRATVGEVSNADHNLCVDGKAGRRRWKGIRPTVRGTAMNPVDHPHGGGEGRHNGYISQTPWGKVTKGLKTRDKRKSNKWIVKDRRK.

2 disordered regions span residues 28–50 and 232–284; these read ELKG…FKKS and RGTA…DRRK. Basic residues predominate over residues 36–46; that stretch reads RSVRPNKKLSF. Basic and acidic residues predominate over residues 240–250; it reads DHPHGGGEGRH. Over residues 264 to 284 the composition is skewed to basic residues; sequence KGLKTRDKRKSNKWIVKDRRK.

It belongs to the universal ribosomal protein uL2 family. In terms of assembly, part of the 50S ribosomal subunit. Forms a bridge to the 30S subunit in the 70S ribosome.

One of the primary rRNA binding proteins. Required for association of the 30S and 50S subunits to form the 70S ribosome, for tRNA binding and peptide bond formation. It has been suggested to have peptidyltransferase activity; this is somewhat controversial. Makes several contacts with the 16S rRNA in the 70S ribosome. In Chlamydia trachomatis serovar L2 (strain ATCC VR-902B / DSM 19102 / 434/Bu), this protein is Large ribosomal subunit protein uL2.